We begin with the raw amino-acid sequence, 845 residues long: G-type lectin S-receptor-like serine/threonine-protein kinase At1g11410 (845 aa).

The N-terminal stretch at 1–21 (MKFFFIFFIFLFSFLIQSCYS) is a signal peptide. In terms of domain architecture, Bulb-type lectin spans 22 to 147 (DNTILRSQSL…VTGKSFWESF (126 aa)). At 22 to 441 (DNTILRSQSL…NGNGASGKKR (420 aa)) the chain is on the extracellular side. N-linked (GlcNAc...) asparagine glycans are attached at residues Asn-82, Asn-103, Asn-185, Asn-231, and Asn-259. The region spanning 283–321 (PEDKCDIYNHCGFNGYCDSTSTEKFECSCLPGYEPKTPR) is the EGF-like domain. Cystine bridges form between Cys-287-Cys-299 and Cys-293-Cys-309. The PAN domain maps to 341-424 (CNGKEGFAKL…SGQDFYLRVD (84 aa)). N-linked (GlcNAc...) asparagine glycans are attached at residues Asn-357, Asn-366, and Asn-379. Disulfide bonds link Cys-372/Cys-399 and Cys-376/Cys-382. Residues 442 to 462 (LVLILISLIAVVMLLLISFHC) traverse the membrane as a helical segment. At 463-845 (YLRKRRQRTQ…DVTLTDVQGR (383 aa)) the chain is on the cytoplasmic side. Residues 523–808 (FAFQNKLGAG…DLPSPKHPAF (286 aa)) enclose the Protein kinase domain. Residues 529-537 (LGAGGFGPV) and Lys-551 each bind ATP. The tract at residues 612-629 (EQRAELDWPKRMGIIRGI) is caM-binding. Asp-648 serves as the catalytic Proton acceptor. Residues 803–845 (PKHPAFTAGRRRNTKTGGSSDNWPSGETSSTINDVTLTDVQGR) form a disordered region. Over residues 817–845 (KTGGSSDNWPSGETSSTINDVTLTDVQGR) the composition is skewed to polar residues.

This sequence belongs to the protein kinase superfamily. Ser/Thr protein kinase family.

It is found in the cell membrane. The enzyme catalyses L-seryl-[protein] + ATP = O-phospho-L-seryl-[protein] + ADP + H(+). It carries out the reaction L-threonyl-[protein] + ATP = O-phospho-L-threonyl-[protein] + ADP + H(+). This is G-type lectin S-receptor-like serine/threonine-protein kinase At1g11410 from Arabidopsis thaliana (Mouse-ear cress).